A 1298-amino-acid polypeptide reads, in one-letter code: DNA-directed RNA polymerase subunit beta' (1298 aa).

Positions 60, 62, 75, and 78 each coordinate Zn(2+). Mg(2+) contacts are provided by Asp535, Asp537, and Asp539. 4 residues coordinate Zn(2+): Cys877, Cys954, Cys961, and Cys964.

Belongs to the RNA polymerase beta' chain family. In terms of assembly, the RNAP catalytic core consists of 2 alpha, 1 beta, 1 beta' and 1 omega subunit. When a sigma factor is associated with the core the holoenzyme is formed, which can initiate transcription. Requires Mg(2+) as cofactor. The cofactor is Zn(2+).

The enzyme catalyses RNA(n) + a ribonucleoside 5'-triphosphate = RNA(n+1) + diphosphate. DNA-dependent RNA polymerase catalyzes the transcription of DNA into RNA using the four ribonucleoside triphosphates as substrates. The chain is DNA-directed RNA polymerase subunit beta' from Micrococcus luteus (strain ATCC 4698 / DSM 20030 / JCM 1464 / CCM 169 / CCUG 5858 / IAM 1056 / NBRC 3333 / NCIMB 9278 / NCTC 2665 / VKM Ac-2230) (Micrococcus lysodeikticus).